We begin with the raw amino-acid sequence, 255 residues long: U2 small nuclear ribonucleoprotein A' (255 aa).

LRR repeat units lie at residues 20–41 (RDRE…GATL), 43–64 (QFDA…PLLR), 65–86 (RLKT…LDQA), and 89–110 (CLTE…DPLA). Residues 123–161 (NPVTNKKHYRLYVIYKVPQVRVLDFQKVKLKERQEAEKM) form the LRRCT domain. Residue Lys172 is modified to N6-acetyllysine; alternate. A Glycyl lysine isopeptide (Lys-Gly) (interchain with G-Cter in SUMO2); alternate cross-link involves residue Lys172. The tract at residues 174 to 201 (IARRSKTFNPGAGLPTDKKKGGPSPGDV) is disordered. 2 positions are modified to phosphoserine: Ser178 and Ser197. A Glycyl lysine isopeptide (Lys-Gly) (interchain with G-Cter in SUMO2) cross-link involves residue Lys221. The disordered stretch occupies residues 222-255 (GLLQSGQIPGRERRSGPTDDGEEEMEEDTVTNGS). A phosphoserine mark is found at Ser236 and Ser255. Residues 240-255 (DDGEEEMEEDTVTNGS) are compositionally biased toward acidic residues.

The protein belongs to the U2 small nuclear ribonucleoprotein A family. As to quaternary structure, identified in the spliceosome B complex. Identified in the spliceosome C complex. Found in a pre-mRNA splicing complex with SFRS4, SFRS5, SNRNP70, SNRPA1, SRRM1 and SRRM2. Found in a pre-mRNA exonic splicing enhancer (ESE) complex with SNRNP70, SNRPA1, SRRM1 and TRA2B. Contributes to the binding of stem loop IV of U2 snRNA with SNRPB2.

The protein resides in the nucleus. Involved in pre-mRNA splicing as component of the spliceosome. Associated with sn-RNP U2, where it contributes to the binding of stem loop IV of U2 snRNA. The sequence is that of U2 small nuclear ribonucleoprotein A' (SNRPA1) from Homo sapiens (Human).